The sequence spans 212 residues: Ropporin-1A (212 aa).

The 38-residue stretch at 12–49 folds into the RIIa domain; that stretch reads PELPKMLKEFAKAAIRVQPQDLIQWAADYFEALSRGET. Ser-56 bears the Phosphoserine mark. Positions 209–212 are interaction with RHPN1; it reads VQLE.

The protein belongs to the ropporin family. Homodimer. Interacts with AKAP3 and RHPN1. May interact with SPA17. Interacts with FSCB; the interaction increases upon spermatozoa capacitation conditions. Interacts with CFAP61. In terms of processing, sumoylated, sumoylation decreases upon spermatozoa capacitation conditions. Testis specific in adult. Overexpressed in hematologic tumor cells.

The protein resides in the cell projection. It localises to the cilium. Its subcellular location is the flagellum. Important for male fertility. With ROPN1L, involved in fibrous sheath integrity and sperm motility, plays a role in PKA-dependent signaling processes required for spermatozoa capacitation. The protein is Ropporin-1A (ROPN1) of Homo sapiens (Human).